Consider the following 366-residue polypeptide: tRNA/tmRNA (uracil-C(5))-methyltransferase (366 aa).

Gln-190, Tyr-218, Asn-223, Glu-239, and Asp-299 together coordinate S-adenosyl-L-methionine. Cys-324 acts as the Nucleophile in catalysis. Glu-358 serves as the catalytic Proton acceptor.

Belongs to the class I-like SAM-binding methyltransferase superfamily. RNA M5U methyltransferase family. TrmA subfamily.

It catalyses the reaction uridine(54) in tRNA + S-adenosyl-L-methionine = 5-methyluridine(54) in tRNA + S-adenosyl-L-homocysteine + H(+). The enzyme catalyses uridine(341) in tmRNA + S-adenosyl-L-methionine = 5-methyluridine(341) in tmRNA + S-adenosyl-L-homocysteine + H(+). In terms of biological role, dual-specificity methyltransferase that catalyzes the formation of 5-methyluridine at position 54 (m5U54) in all tRNAs, and that of position 341 (m5U341) in tmRNA (transfer-mRNA). The protein is tRNA/tmRNA (uracil-C(5))-methyltransferase of Klebsiella pneumoniae subsp. pneumoniae (strain ATCC 700721 / MGH 78578).